Here is a 327-residue protein sequence, read N- to C-terminus: Lipoyl synthase (327 aa).

Residues Cys74, Cys79, Cys85, Cys100, Cys104, Cys107, and Ser314 each coordinate [4Fe-4S] cluster. The 218-residue stretch at 86 to 303 (FSGGTATFMI…AEEGERMGFK (218 aa)) folds into the Radical SAM core domain.

The protein belongs to the radical SAM superfamily. Lipoyl synthase family. Requires [4Fe-4S] cluster as cofactor.

It is found in the cytoplasm. The enzyme catalyses [[Fe-S] cluster scaffold protein carrying a second [4Fe-4S](2+) cluster] + N(6)-octanoyl-L-lysyl-[protein] + 2 oxidized [2Fe-2S]-[ferredoxin] + 2 S-adenosyl-L-methionine + 4 H(+) = [[Fe-S] cluster scaffold protein] + N(6)-[(R)-dihydrolipoyl]-L-lysyl-[protein] + 4 Fe(3+) + 2 hydrogen sulfide + 2 5'-deoxyadenosine + 2 L-methionine + 2 reduced [2Fe-2S]-[ferredoxin]. It functions in the pathway protein modification; protein lipoylation via endogenous pathway; protein N(6)-(lipoyl)lysine from octanoyl-[acyl-carrier-protein]: step 2/2. Its function is as follows. Catalyzes the radical-mediated insertion of two sulfur atoms into the C-6 and C-8 positions of the octanoyl moiety bound to the lipoyl domains of lipoate-dependent enzymes, thereby converting the octanoylated domains into lipoylated derivatives. In Pseudomonas paraeruginosa (strain DSM 24068 / PA7) (Pseudomonas aeruginosa (strain PA7)), this protein is Lipoyl synthase.